The following is a 317-amino-acid chain: Cyclin-dependent kinase 1 (317 aa).

One can recognise a Protein kinase domain in the interval 7–292 (YQRQEKVGEG…AKRALIHPYF (286 aa)). ATP is bound by residues 13 to 21 (VGEGTYGVV) and Lys-37. Residue Thr-17 is modified to Phosphothreonine. Tyr-18 is modified (phosphotyrosine; by SWE1). The active-site Proton acceptor is the Asp-133. Thr-166 is modified (phosphothreonine; by CAK). The disordered stretch occupies residues 296 to 317 (DDRDHNNYNEDNIGIDKHQNMQ).

It belongs to the protein kinase superfamily. CMGC Ser/Thr protein kinase family. CDC2/CDKX subfamily. Forms several complexes with cyclins CCN1, CLB2, CLN3, and HGC1. The CDC28-CCN1 complex associates with septin CDC11 upon hyphal induction. Interacts with IQG1, RFA2, and HSP90. Phosphorylated at Tyr-18 by SWE1 in a cell cycle-dependent manner. Yeast-form and hyphal cells display similar dynamics of phosphorylation and dephosphorylation of Tyr-18. Tyr-18 phosphorylation leads to inhibition of CDC28 kinase activity.

It carries out the reaction L-seryl-[protein] + ATP = O-phospho-L-seryl-[protein] + ADP + H(+). The catalysed reaction is L-threonyl-[protein] + ATP = O-phospho-L-threonyl-[protein] + ADP + H(+). Phosphorylation at Thr-17 or Tyr-18 inactivates the enzyme, while phosphorylation at Thr-166 activates it. Functionally, cyclin-dependent kinase that acts as a master regulator of the mitotic and meiotic cell cycles. May drive the G1-S transition. Plays a role in mitotic exit. Plays a role in the expression of morphology-related transcription factors, and especially hyphae-specific genes. Binds distinct cyclin subunits as cells progress through the division cycle or flamentous growth. The CDC28-CLB2 complex regulates cytokinesis partly by phosphorylating the actomyosin ring component IQG1. The CDC28-CLN3 complex phosphorylates SLA1 which regulates cortical actin patch dynamics. The CDC28-CCN1 complex phosphorylates CDC11 and SEC2 upon induction of filamentous growth. The CDC28-HGC1 complex also phosphorylates SEC2 and maintains CDC11 phosphorylation throughout hyphal growth. Moreover, the CDC28-HGC1 complex phosphorylates and prevents RGA2 from localizing to hyphal tips, leading to localized CDC42 activation for hyphal extension. CDC28-HGC1 phosphorylation of EFG1 represses cell separation genes during hyphal growth. Additional substrates for CDC28 are RFA2 in G1-phase; MOB2, which is required for the maintenance of polarisome components and for inhibition of cell separation in hyphae; and GIN4 to regulate its association to SEP7 and subsequent septin ring assembly. The chain is Cyclin-dependent kinase 1 from Candida albicans (strain SC5314 / ATCC MYA-2876) (Yeast).